A 148-amino-acid polypeptide reads, in one-letter code: UPF0756 membrane protein YeaL (148 aa).

4 consecutive transmembrane segments (helical) span residues 14–34, 51–71, 86–106, and 121–141; these read ALGFISHNTTVAVSILVLIIV, LSIGIIILTIGVMAPIASGTL, LVAIAVGVIVYWLGGRGVTLM, and VLGVALFRGVPVGPLIAAGLV.

It belongs to the UPF0756 family.

It is found in the cell membrane. The polypeptide is UPF0756 membrane protein YeaL (Shigella dysenteriae serotype 1 (strain Sd197)).